The chain runs to 500 residues: Glycerol kinase (500 aa).

Threonine 14 provides a ligand contact to ADP. Residues threonine 14, threonine 15, and serine 16 each coordinate ATP. Sn-glycerol 3-phosphate is bound at residue threonine 14. Arginine 18 contributes to the ADP binding site. Arginine 84, glutamate 85, and tyrosine 136 together coordinate sn-glycerol 3-phosphate. Glycerol is bound by residues arginine 84, glutamate 85, and tyrosine 136. Histidine 232 is subject to Phosphohistidine; by HPr. Residue aspartate 246 coordinates sn-glycerol 3-phosphate. The glycerol site is built by aspartate 246 and glutamine 247. ADP-binding residues include threonine 268 and glycine 311. Residues threonine 268, glycine 311, glutamine 315, and glycine 412 each coordinate ATP. Glycine 412 and asparagine 416 together coordinate ADP.

It belongs to the FGGY kinase family. As to quaternary structure, homotetramer and homodimer (in equilibrium). In terms of processing, the phosphoenolpyruvate-dependent sugar phosphotransferase system (PTS), including enzyme I, and histidine-containing protein (HPr) are required for the phosphorylation, which leads to the activation of the enzyme.

The enzyme catalyses glycerol + ATP = sn-glycerol 3-phosphate + ADP + H(+). Its pathway is polyol metabolism; glycerol degradation via glycerol kinase pathway; sn-glycerol 3-phosphate from glycerol: step 1/1. Its activity is regulated as follows. Activated by phosphorylation and inhibited by fructose 1,6-bisphosphate (FBP). Key enzyme in the regulation of glycerol uptake and metabolism. Catalyzes the phosphorylation of glycerol to yield sn-glycerol 3-phosphate. The protein is Glycerol kinase of Limosilactobacillus reuteri (strain DSM 20016) (Lactobacillus reuteri).